The chain runs to 94 residues: Putative pterin-4-alpha-carbinolamine dehydratase (94 aa).

It belongs to the pterin-4-alpha-carbinolamine dehydratase family.

It carries out the reaction (4aS,6R)-4a-hydroxy-L-erythro-5,6,7,8-tetrahydrobiopterin = (6R)-L-erythro-6,7-dihydrobiopterin + H2O. This Mycobacterium sp. (strain KMS) protein is Putative pterin-4-alpha-carbinolamine dehydratase.